Reading from the N-terminus, the 236-residue chain is Small ribosomal subunit protein uS3 (236 aa).

The KH type-2 domain maps to 39–107; sequence VREFLKKSLS…PAQISITEIK (69 aa).

It belongs to the universal ribosomal protein uS3 family. In terms of assembly, part of the 30S ribosomal subunit. Forms a tight complex with proteins S10 and S14.

Binds the lower part of the 30S subunit head. Binds mRNA in the 70S ribosome, positioning it for translation. In Wigglesworthia glossinidia brevipalpis, this protein is Small ribosomal subunit protein uS3.